Here is a 21-residue protein sequence, read N- to C-terminus: Thioredoxin (21 aa).

Position 3 is an N6-acetyllysine (Lys3). Lys8 bears the N6-succinyllysine mark.

This sequence belongs to the thioredoxin family. In terms of assembly, homodimer; disulfide-linked. Interacts with TXNIP through the redox-active site. Interacts with MAP3K5 and CASP3. Interacts with APEX1; the interaction stimulates the FOS/JUN AP-1 DNA-binding activity in a redox-dependent manner.

It is found in the nucleus. The protein localises to the cytoplasm. The protein resides in the secreted. Participates in various redox reactions through the reversible oxidation of its active center dithiol to a disulfide and catalyzes dithiol-disulfide exchange reactions. Plays a role in the reversible S-nitrosylation of cysteine residues in target proteins, and thereby contributes to the response to intracellular nitric oxide. Nitrosylates the active site Cys of CASP3 in response to nitric oxide (NO), and thereby inhibits caspase-3 activity. Induces the FOS/JUN AP-1 DNA binding activity in ionizing radiation (IR) cells through its oxidation/reduction status and stimulates AP-1 transcriptional activity. The chain is Thioredoxin (TXN) from Canis lupus familiaris (Dog).